The chain runs to 167 residues: MLVYQDLLSGDELLSDSFTYKELENGVLWEVEGKWVTQGPVDVDIGANPSAEGGEDESVDDTAVKVVDIVDTFRLQEQPPFDKKSFVSYIKKYIKNLTAVLEPEKADEFKKGVEGATKFLLSKLKDLQFFVGESMKDDASVAFAYYKDGATNSTFLYFSHGLKEIKC.

Residues 1-167 (MLVYQDLLSG…FSHGLKEIKC (167 aa)) form the TCTP domain.

This sequence belongs to the TCTP family.

The protein resides in the cytoplasm. Functionally, involved in calcium binding and microtubule stabilization. The polypeptide is Translationally-controlled tumor protein homolog (TCTP) (Zea mays (Maize)).